A 222-amino-acid chain; its full sequence is Probable GTP-binding protein EngB (222 aa).

In terms of domain architecture, EngB-type G spans 27–202; the sequence is TGIEVAFAGR…AKKLDEWFLG (176 aa). GTP-binding positions include 35–42, 61–65, 81–84, 148–151, and 181–183; these read GRSNAGKS, GRTQL, DLPG, TKAD, and FSS. Residues Ser42 and Thr63 each coordinate Mg(2+).

Belongs to the TRAFAC class TrmE-Era-EngA-EngB-Septin-like GTPase superfamily. EngB GTPase family. It depends on Mg(2+) as a cofactor.

Its function is as follows. Necessary for normal cell division and for the maintenance of normal septation. The sequence is that of Probable GTP-binding protein EngB from Pseudoalteromonas translucida (strain TAC 125).